Here is an 83-residue protein sequence, read N- to C-terminus: Evasin P1090 (83 aa).

The N-terminal stretch at 1 to 24 (MEVKIFAFLQIAVLIAFSLHLASA) is a signal peptide. Cystine bridges form between Cys44-Cys63, Cys48-Cys65, and Cys59-Cys76. The N-linked (GlcNAc...) asparagine glycan is linked to Asn47. Asn70 is a glycosylation site (N-linked (GlcNAc...) asparagine).

The protein resides in the secreted. Functionally, salivary chemokine-binding protein which binds to host chemokines CXCL1, CXCL2, CXCL3, CXCL5, CXCL6, CXCL10, CXCL11 and CXCL13. In Ixodes ricinus (Common tick), this protein is Evasin P1090.